The sequence spans 339 residues: Anthranilate phosphoribosyltransferase (339 aa).

5-phospho-alpha-D-ribose 1-diphosphate is bound by residues G80, G83–D84, T88, N90–T93, K108–S116, and S120. G80 is an anthranilate binding site. S92 contributes to the Mg(2+) binding site. Residue N111 coordinates anthranilate. Residue R166 participates in anthranilate binding. Residues D225 and E226 each contribute to the Mg(2+) site.

It belongs to the anthranilate phosphoribosyltransferase family. As to quaternary structure, homodimer. Mg(2+) serves as cofactor.

The catalysed reaction is N-(5-phospho-beta-D-ribosyl)anthranilate + diphosphate = 5-phospho-alpha-D-ribose 1-diphosphate + anthranilate. It participates in amino-acid biosynthesis; L-tryptophan biosynthesis; L-tryptophan from chorismate: step 2/5. Its function is as follows. Catalyzes the transfer of the phosphoribosyl group of 5-phosphorylribose-1-pyrophosphate (PRPP) to anthranilate to yield N-(5'-phosphoribosyl)-anthranilate (PRA). The chain is Anthranilate phosphoribosyltransferase from Caldanaerobacter subterraneus subsp. tengcongensis (strain DSM 15242 / JCM 11007 / NBRC 100824 / MB4) (Thermoanaerobacter tengcongensis).